The sequence spans 319 residues: Acetyl-coenzyme A carboxylase carboxyl transferase subunit alpha (319 aa).

Residues N35–D296 enclose the CoA carboxyltransferase C-terminal domain.

This sequence belongs to the AccA family. In terms of assembly, acetyl-CoA carboxylase is a heterohexamer composed of biotin carboxyl carrier protein (AccB), biotin carboxylase (AccC) and two subunits each of ACCase subunit alpha (AccA) and ACCase subunit beta (AccD).

The protein localises to the cytoplasm. The enzyme catalyses N(6)-carboxybiotinyl-L-lysyl-[protein] + acetyl-CoA = N(6)-biotinyl-L-lysyl-[protein] + malonyl-CoA. It functions in the pathway lipid metabolism; malonyl-CoA biosynthesis; malonyl-CoA from acetyl-CoA: step 1/1. Functionally, component of the acetyl coenzyme A carboxylase (ACC) complex. First, biotin carboxylase catalyzes the carboxylation of biotin on its carrier protein (BCCP) and then the CO(2) group is transferred by the carboxyltransferase to acetyl-CoA to form malonyl-CoA. In Salmonella paratyphi C (strain RKS4594), this protein is Acetyl-coenzyme A carboxylase carboxyl transferase subunit alpha.